A 508-amino-acid polypeptide reads, in one-letter code: Maturase K (508 aa).

Belongs to the intron maturase 2 family. MatK subfamily.

The protein localises to the plastid. It is found in the chloroplast. Functionally, usually encoded in the trnK tRNA gene intron. Probably assists in splicing its own and other chloroplast group II introns. The protein is Maturase K of Stewartia pseudocamellia (Japanese stewartia).